A 238-amino-acid chain; its full sequence is Large ribosomal subunit protein uL1 (238 aa).

This sequence belongs to the universal ribosomal protein uL1 family. Part of the 50S ribosomal subunit.

In terms of biological role, binds directly to 23S rRNA. The L1 stalk is quite mobile in the ribosome, and is involved in E site tRNA release. Protein L1 is also a translational repressor protein, it controls the translation of the L11 operon by binding to its mRNA. The chain is Large ribosomal subunit protein uL1 from Frankia casuarinae (strain DSM 45818 / CECT 9043 / HFP020203 / CcI3).